The primary structure comprises 181 residues: MTEDNNKAAGAKPRPARQVRTGLTSTGARKASAKSNRSRAREFALQALYQHLVGRNDPTEIDHFTRDLAGFHKADAAHYDALLHGSIEGAEQLDALIRPLLDRKFEEISPIEHAVMWIGVYEFQHCLDVPWRVVLNECIELAKEFGGTDGHKYVNAVLNGLAPQLRAAEVEADRASGKARA.

The disordered stretch occupies residues 1-36 (MTEDNNKAAGAKPRPARQVRTGLTSTGARKASAKSN).

Belongs to the NusB family.

Functionally, involved in transcription antitermination. Required for transcription of ribosomal RNA (rRNA) genes. Binds specifically to the boxA antiterminator sequence of the ribosomal RNA (rrn) operons. The protein is Transcription antitermination protein NusB of Variovorax paradoxus (strain S110).